Reading from the N-terminus, the 188-residue chain is dCTP deaminase (188 aa).

109-114 (KSTYAR) is a binding site for dCTP. Glu-135 functions as the Proton donor/acceptor in the catalytic mechanism. 3 residues coordinate dCTP: Gln-154, Tyr-168, and Gln-178.

Belongs to the dCTP deaminase family. Homotrimer.

It catalyses the reaction dCTP + H2O + H(+) = dUTP + NH4(+). Its pathway is pyrimidine metabolism; dUMP biosynthesis; dUMP from dCTP (dUTP route): step 1/2. Functionally, catalyzes the deamination of dCTP to dUTP. The protein is dCTP deaminase of Helicobacter pylori (strain J99 / ATCC 700824) (Campylobacter pylori J99).